We begin with the raw amino-acid sequence, 210 residues long: High mobility group protein B2 (210 aa).

Residue K3 is modified to N6-acetyllysine. Positions 9–79 form a DNA-binding region, HMG box 1; the sequence is PRGKMSSYAF…RYDREMKNYV (71 aa). C23 is modified (cysteine sulfonic acid (-SO3H); alternate). Cysteines 23 and 45 form a disulfide. Position 30 is an N6-acetyllysine (K30). A Phosphoserine modification is found at S35. The residue at position 43 (K43) is an N6-acetyllysine. C45 carries the post-translational modification Cysteine sulfonic acid (-SO3H); alternate. The disordered stretch occupies residues 71–102; that stretch reads YDREMKNYVPPKGDKKGKKKDPNAPKRPPSAF. Position 90 is an N6-acetyllysine (K90). Residues 95 to 163 constitute a DNA-binding region (HMG box 2); the sequence is PKRPPSAFFL…KYEKDIAAYR (69 aa). S100 is subject to Phosphoserine. The residue at position 106 (C106) is a Cysteine sulfonic acid (-SO3H). An N6-acetyllysine mark is found at K114 and K141. The span at 162–172 shows a compositional bias: basic and acidic residues; it reads YRAKGKSEAGK. Residues 162–210 form a disordered region; that stretch reads YRAKGKSEAGKKGPGRPTGSKKKNEPEDEEEEEEEEEEEDDEEEEEDEE. The tract at residues 165–180 is required for chemotactic activity; sequence KGKSEAGKKGPGRPTG. Residues 187–210 show a composition bias toward acidic residues; sequence PEDEEEEEEEEEEEDDEEEEEDEE.

Belongs to the HMGB family. In terms of assembly, interacts with POU2F2, POU2F1 and POU3F1. Component of the RAG complex composed of core components RAG1 and RAG2, and associated component HMGB1 or HMGB2. Component of the SET complex, composed of at least ANP32A, APEX1, HMGB2, NME1, SET and TREX1. Directly interacts with SET. Interacts with LEF1. Reduction/oxidation of cysteine residues Cys-23, Cys-45 and Cys-106 and a possible intramolecular disulfide bond involving Cys-23 and Cys-45 give rise to different redox forms with specific functional activities in various cellular compartments: 1- fully reduced HMGB2 (HMGB2C23hC45hC106h), 2- disulfide HMGB2 (HMGB2C23-C45C106h) and 3- sulfonyl HMGB2 (HMGB2C23soC45soC106so). In terms of tissue distribution, widely expressed in embryo. In adult mainly expressed in lymphoid organs and testes. Expressed in primary spermatocytes. Expressed in the superficial zone of articular cartilage.

The protein localises to the nucleus. It is found in the chromosome. The protein resides in the cytoplasm. It localises to the secreted. Its function is as follows. Multifunctional protein with various roles in different cellular compartments. May act in a redox sensitive manner. In the nucleus is an abundant chromatin-associated non-histone protein involved in transcription, chromatin remodeling and V(D)J recombination and probably other processes. Binds DNA with a preference to non-canonical DNA structures such as single-stranded DNA. Can bent DNA and enhance DNA flexibility by looping thus providing a mechanism to promote activities on various gene promoters by enhancing transcription factor binding and/or bringing distant regulatory sequences into close proximity. Involved in V(D)J recombination by acting as a cofactor of the RAG complex: acts by stimulating cleavage and RAG protein binding at the 23 bp spacer of conserved recombination signal sequences (RSS). Proposed to be involved in the innate immune response to nucleic acids by acting as a cytoplasmic promiscuous immunogenic DNA/RNA sensor which cooperates with subsequent discriminative sensing by specific pattern recognition receptors. In the extracellular compartment acts as a chemokine. Promotes proliferation and migration of endothelial cells implicating AGER/RAGE. Has antimicrobial activity in gastrointestinal epithelial tissues. Involved in inflammatory response to antigenic stimulus coupled with pro-inflammatory activity. May play a role in germ cell differentiation. Involved in modulation of neurogenesis probably by regulation of neural stem proliferation. Involved in articular cartilage surface maintenance implicating LEF1 and the Wnt/beta-catenin pathway. The polypeptide is High mobility group protein B2 (Hmgb2) (Mus musculus (Mouse)).